Reading from the N-terminus, the 353-residue chain is Photosystem II protein D1 (353 aa).

The residue at position 2 (Thr2) is an N-acetylthreonine. Phosphothreonine is present on Thr2. Transmembrane regions (helical) follow at residues 29–46, 118–133, and 142–156; these read YIGWFGVLMIPTLLTATS, HFLLGVACYMGREWEL, and WIAVAYSAPVAAATA. A chlorophyll a-binding site is contributed by His118. Tyr126 contributes to the pheophytin a binding site. Residues Asp170 and Glu189 each contribute to the [CaMn4O5] cluster site. Residues 197–218 traverse the membrane as a helical segment; the sequence is FHMLGVAGVFGGSLFSAMHGSL. Chlorophyll a is bound at residue His198. A quinone contacts are provided by residues His215 and 264–265; that span reads SF. His215 is a Fe cation binding site. Fe cation is bound at residue His272. The helical transmembrane segment at 274-288 threads the bilayer; that stretch reads FLAAWPVVGIWFTAL. 4 residues coordinate [CaMn4O5] cluster: His332, Glu333, Asp342, and Ala344. Residues 345 to 353 constitute a propeptide that is removed on maturation; the sequence is AVEVPSING.

Belongs to the reaction center PufL/M/PsbA/D family. PSII is composed of 1 copy each of membrane proteins PsbA, PsbB, PsbC, PsbD, PsbE, PsbF, PsbH, PsbI, PsbJ, PsbK, PsbL, PsbM, PsbT, PsbX, PsbY, PsbZ, Psb30/Ycf12, at least 3 peripheral proteins of the oxygen-evolving complex and a large number of cofactors. It forms dimeric complexes. The cofactor is The D1/D2 heterodimer binds P680, chlorophylls that are the primary electron donor of PSII, and subsequent electron acceptors. It shares a non-heme iron and each subunit binds pheophytin, quinone, additional chlorophylls, carotenoids and lipids. D1 provides most of the ligands for the Mn4-Ca-O5 cluster of the oxygen-evolving complex (OEC). There is also a Cl(-1) ion associated with D1 and D2, which is required for oxygen evolution. The PSII complex binds additional chlorophylls, carotenoids and specific lipids.. Tyr-161 forms a radical intermediate that is referred to as redox-active TyrZ, YZ or Y-Z. In terms of processing, C-terminally processed by CTPA; processing is essential to allow assembly of the oxygen-evolving complex and thus photosynthetic growth.

The protein localises to the plastid. The protein resides in the chloroplast thylakoid membrane. It catalyses the reaction 2 a plastoquinone + 4 hnu + 2 H2O = 2 a plastoquinol + O2. In terms of biological role, photosystem II (PSII) is a light-driven water:plastoquinone oxidoreductase that uses light energy to abstract electrons from H(2)O, generating O(2) and a proton gradient subsequently used for ATP formation. It consists of a core antenna complex that captures photons, and an electron transfer chain that converts photonic excitation into a charge separation. The D1/D2 (PsbA/PsbD) reaction center heterodimer binds P680, the primary electron donor of PSII as well as several subsequent electron acceptors. This chain is Photosystem II protein D1, found in Cucumis sativus (Cucumber).